The sequence spans 436 residues: Homeobox protein PKNOX1 (436 aa).

Residues 1–20 (MMATQTLSIDSYQDGQQMQV) are compositionally biased toward polar residues. Residues 1–49 (MMATQTLSIDSYQDGQQMQVVTELKTEQDPNCSEPDAEGVSPPPVESQT) form a disordered region. Phosphoserine occurs at positions 33 and 41. Residues 80–163 (GSEGTTSASF…MNSETLLSGE (84 aa)) form the MEIS N-terminal domain. A DNA-binding region (homeobox; TALE-type) is located at residues 259-321 (SKNKRGVLPK…NARRRILQPM (63 aa)). A disordered region spans residues 401–436 (AGQSEDESVDSTEEDAGALAPAHISGLVLENSDSLQ). Residues 404–416 (SEDESVDSTEEDA) are compositionally biased toward acidic residues.

The protein belongs to the TALE/MEIS homeobox family. Interacts with MN1. In terms of tissue distribution, ubiquitous. Isoform 2 is expressed in all examined tissues except in bone marrow.

It is found in the nucleus. Activates transcription in the presence of PBX1A and HOXA1. In Homo sapiens (Human), this protein is Homeobox protein PKNOX1.